The sequence spans 181 residues: Shikimate kinase (181 aa).

23-28 (GTGKST) contributes to the ATP binding site. A Mg(2+)-binding site is contributed by serine 27. Substrate contacts are provided by aspartate 45, arginine 69, and glycine 91. Arginine 129 is a binding site for ATP. Substrate is bound at residue arginine 148.

Belongs to the shikimate kinase family. As to quaternary structure, monomer. The cofactor is Mg(2+).

Its subcellular location is the cytoplasm. It carries out the reaction shikimate + ATP = 3-phosphoshikimate + ADP + H(+). Its pathway is metabolic intermediate biosynthesis; chorismate biosynthesis; chorismate from D-erythrose 4-phosphate and phosphoenolpyruvate: step 5/7. Its function is as follows. Catalyzes the specific phosphorylation of the 3-hydroxyl group of shikimic acid using ATP as a cosubstrate. The protein is Shikimate kinase of Geobacter sulfurreducens (strain ATCC 51573 / DSM 12127 / PCA).